The chain runs to 219 residues: MSDLANTAERRGEKRPAGGNRRGNRLPRDERRGQLLIAASEVFVDRGYHAAGMDEIADRAGVSKPVLYQHFSSKLELYLAVLQRHVDNLVSGVRQALRTTTDNRQRLRAAVEAFFDFIEHDSQGYRLIFENDYVTEPQVAAQVKVATEACTDAVFDLISRDSGLEAHRARMIAVGLVAISVDSARYWLNNDRPIDKDSAVEGTVQFAWGGLSHVPLTRS.

The tract at residues 1 to 30 (MSDLANTAERRGEKRPAGGNRRGNRLPRDE) is disordered. The 61-residue stretch at 29 to 89 (DERRGQLLIA…AVLQRHVDNL (61 aa)) folds into the HTH tetR-type domain. Positions 52–71 (GMDEIADRAGVSKPVLYQHF) form a DNA-binding region, H-T-H motif.

In terms of assembly, homodimer.

Its activity is regulated as follows. FasR:DNA binding is regulated by long-chain acyl-CoAs (C14- to C26-CoA), which act as effector molecules that modulate the affinity of FasR for its DNA binding sequences and therefore modulate the expression of the essential fas-acpS operon. Transcriptional activator that plays a central role in sensing mycobacterial long-chain fatty acids and regulating lipid biosynthesis. Activates the expression of the genes encoding the fatty acid synthase (fas) and the 4-phosphopantetheinyl transferase (acpS), whose products are involved in the fatty acid and mycolic acid biosynthesis. Specifically binds to three conserved operator sequences present in the fas-acpS promoter region. Essential for M.smegmatis viability. The polypeptide is HTH-type transcriptional activator FasR (Mycolicibacterium smegmatis (strain ATCC 700084 / mc(2)155) (Mycobacterium smegmatis)).